Consider the following 235-residue polypeptide: Protein MAINTENANCE OF PSII UNDER HIGH LIGHT 1 (235 aa).

The chain crosses the membrane as a helical span at residues 127–147; that stretch reads TAAIVAGIALIAVAAASSILL. Positions 181-235 are disordered; the sequence is QPSTPSVTEAPPVAELETSLPETPSVAQQETSLPETMASEAQPEASSVPTTSSTS. Polar residues-rich tracts occupy residues 200–214 and 224–235; these read LPET…TSLP and EASSVPTTSSTS.

As to quaternary structure, interacts with psbA, psbB, psbC and psbD.

The protein resides in the plastid. The protein localises to the chloroplast thylakoid membrane. In terms of biological role, interacts with photosystem II (PSII) core complexes and participates in the maintenance of normal PSII activity under photoinhibitory stress. May protect against photodamage or stabilize PSII under high-light stress. Participates in the maintainance of proper PSII function under high-light stress by protecting PSII from photooxidative damage. This Arabidopsis thaliana (Mouse-ear cress) protein is Protein MAINTENANCE OF PSII UNDER HIGH LIGHT 1.